The sequence spans 303 residues: N-acetylmuramic acid 6-phosphate etherase (303 aa).

A disordered region spans residues 1 to 21 (MQPSQLRSLTTESRNPNTMGI). In terms of domain architecture, SIS spans 58–221 (AYDSISNGGR…STSVMIRQGK (164 aa)). The active-site Proton donor is the Glu86. The active site involves Glu117.

It belongs to the GCKR-like family. MurNAc-6-P etherase subfamily. Homodimer.

It catalyses the reaction N-acetyl-D-muramate 6-phosphate + H2O = N-acetyl-D-glucosamine 6-phosphate + (R)-lactate. It functions in the pathway amino-sugar metabolism; N-acetylmuramate degradation. Its function is as follows. Specifically catalyzes the cleavage of the D-lactyl ether substituent of MurNAc 6-phosphate, producing GlcNAc 6-phosphate and D-lactate. The protein is N-acetylmuramic acid 6-phosphate etherase of Bacillus pumilus (strain SAFR-032).